Reading from the N-terminus, the 26-residue chain is Stage V sporulation protein M (26 aa).

Residues 3–9 are important for localization; the sequence is FYTIKLP.

Interacts with SpoIVA. May interact with the ATP-dependent protease FtsH.

Its subcellular location is the forespore outer membrane. Coordinates cortex and coat assembly during sporulation. Associates with the spore coat protein SpoIVA and with the outer forespore membrane, thereby serving as a membrane anchor that tethers SpoIVA and the entire spore coat to the forespore surface. May also serve as a competitive inhibitor of FtsH activity during sporulation. The chain is Stage V sporulation protein M from Bacillus subtilis (strain 168).